We begin with the raw amino-acid sequence, 119 residues long: Ribonuclease P protein component (119 aa).

This sequence belongs to the RnpA family. Consists of a catalytic RNA component (M1 or rnpB) and a protein subunit.

It catalyses the reaction Endonucleolytic cleavage of RNA, removing 5'-extranucleotides from tRNA precursor.. RNaseP catalyzes the removal of the 5'-leader sequence from pre-tRNA to produce the mature 5'-terminus. It can also cleave other RNA substrates such as 4.5S RNA. The protein component plays an auxiliary but essential role in vivo by binding to the 5'-leader sequence and broadening the substrate specificity of the ribozyme. The chain is Ribonuclease P protein component from Pasteurella multocida (strain Pm70).